Consider the following 293-residue polypeptide: Acidic endochitinase (293 aa).

An N-terminal signal peptide occupies residues 1 to 22; it reads MEKCFNIIPSLLLISLLIKSSN. Residues 24–293 enclose the GH18 domain; sequence AGIAVYWGQN…GYSNAIKGSV (270 aa). Disulfide bonds link Cys43–Cys90 and Cys73–Cys80. Catalysis depends on Glu150, which acts as the Proton donor. A disulfide bridge links Cys179 with Cys208.

This sequence belongs to the glycosyl hydrolase 18 family. Chitinase class II subfamily.

It localises to the secreted. It is found in the extracellular space. The catalysed reaction is Random endo-hydrolysis of N-acetyl-beta-D-glucosaminide (1-&gt;4)-beta-linkages in chitin and chitodextrins.. In terms of biological role, this protein functions as a defense against chitin containing fungal pathogens. In Cicer arietinum (Chickpea), this protein is Acidic endochitinase.